The sequence spans 446 residues: Elongation factor Ts, mitochondrial (446 aa).

The N-terminal 33 residues, 1–33 (MSGSRSALSVVRLAACAKPCTLGSTSSVLTRPF), are a transit peptide targeting the mitochondrion.

The protein belongs to the EF-Ts family.

It is found in the mitochondrion. Associates with the EF-Tu.GDP complex and induces the exchange of GDP to GTP. It remains bound to the aminoacyl-tRNA.EF-Tu.GTP complex up to the GTP hydrolysis stage on the ribosome. This Mycosarcoma maydis (Corn smut fungus) protein is Elongation factor Ts, mitochondrial.